The primary structure comprises 119 residues: MORF4 family associated protein 1 like 2 (119 aa).

Basic and acidic residues predominate over residues 1-16 (MRPVDADEAREPREEP). A disordered region spans residues 1–36 (MRPVDADEAREPREEPGSPLSPAPRAGRENLASLER).

This sequence belongs to the MORF4 family-associated protein family. In terms of assembly, may interact with CDK2AP1.

Its function is as follows. May play a role in cell proliferation. This Homo sapiens (Human) protein is MORF4 family associated protein 1 like 2.